Reading from the N-terminus, the 256-residue chain is Putative F-box protein At3g51171 (256 aa).

An F-box domain is found at 1 to 44; the sequence is MVPLPWELEEDILSRLAAQSLVRFRSVCKRWNYLFDEKSFIKNH.

This is Putative F-box protein At3g51171 from Arabidopsis thaliana (Mouse-ear cress).